The sequence spans 73 residues: Putative membrane protein insertion efficiency factor (73 aa).

The protein belongs to the UPF0161 family.

Its subcellular location is the cell inner membrane. Its function is as follows. Could be involved in insertion of integral membrane proteins into the membrane. This Bacteroides fragilis (strain ATCC 25285 / DSM 2151 / CCUG 4856 / JCM 11019 / LMG 10263 / NCTC 9343 / Onslow / VPI 2553 / EN-2) protein is Putative membrane protein insertion efficiency factor.